The sequence spans 201 residues: Small ribosomal subunit protein uS4c (201 aa).

In terms of domain architecture, S4 RNA-binding spans 89–150; that stretch reads MRLDNILFRL…KQRSKVLIQN (62 aa).

The protein belongs to the universal ribosomal protein uS4 family. In terms of assembly, part of the 30S ribosomal subunit. Contacts protein S5. The interaction surface between S4 and S5 is involved in control of translational fidelity.

The protein localises to the plastid. The protein resides in the chloroplast. Its function is as follows. One of the primary rRNA binding proteins, it binds directly to 16S rRNA where it nucleates assembly of the body of the 30S subunit. With S5 and S12 plays an important role in translational accuracy. This Dioscorea elephantipes (Elephant's foot yam) protein is Small ribosomal subunit protein uS4c (rps4).